A 78-amino-acid polypeptide reads, in one-letter code: Acyl carrier protein (78 aa).

Residues 2 to 77 form the Carrier domain; that stretch reads SDTADRVKKI…DAIKYIDENK (76 aa). S37 is modified (O-(pantetheine 4'-phosphoryl)serine).

The protein belongs to the acyl carrier protein (ACP) family. 4'-phosphopantetheine is transferred from CoA to a specific serine of apo-ACP by AcpS. This modification is essential for activity because fatty acids are bound in thioester linkage to the sulfhydryl of the prosthetic group.

It is found in the cytoplasm. The protein operates within lipid metabolism; fatty acid biosynthesis. Carrier of the growing fatty acid chain in fatty acid biosynthesis. The chain is Acyl carrier protein from Novosphingobium aromaticivorans (strain ATCC 700278 / DSM 12444 / CCUG 56034 / CIP 105152 / NBRC 16084 / F199).